Reading from the N-terminus, the 474-residue chain is ATP synthase subunit beta 2 (474 aa).

156–163 (GGAGVGKT) serves as a coordination point for ATP.

The protein belongs to the ATPase alpha/beta chains family. F-type ATPases have 2 components, CF(1) - the catalytic core - and CF(0) - the membrane proton channel. CF(1) has five subunits: alpha(3), beta(3), gamma(1), delta(1), epsilon(1). CF(0) has three main subunits: a(1), b(2) and c(9-12). The alpha and beta chains form an alternating ring which encloses part of the gamma chain. CF(1) is attached to CF(0) by a central stalk formed by the gamma and epsilon chains, while a peripheral stalk is formed by the delta and b chains.

It is found in the cell inner membrane. The catalysed reaction is ATP + H2O + 4 H(+)(in) = ADP + phosphate + 5 H(+)(out). Functionally, produces ATP from ADP in the presence of a proton gradient across the membrane. The catalytic sites are hosted primarily by the beta subunits. The sequence is that of ATP synthase subunit beta 2 from Shewanella frigidimarina (strain NCIMB 400).